Reading from the N-terminus, the 796-residue chain is Probable phosphoketolase (796 aa).

Belongs to the XFP family. The cofactor is thiamine diphosphate.

The sequence is that of Probable phosphoketolase from Clostridium acetobutylicum (strain ATCC 824 / DSM 792 / JCM 1419 / IAM 19013 / LMG 5710 / NBRC 13948 / NRRL B-527 / VKM B-1787 / 2291 / W).